Here is a 529-residue protein sequence, read N- to C-terminus: Alkaline phosphatase, germ cell type (529 aa).

Residues 1–18 (MWGACLLLLGLSLQVCPS) form the signal peptide. Residue aspartate 60 participates in Mg(2+) binding. The Zn(2+) site is built by aspartate 60 and serine 110. The active-site Phosphoserine intermediate is the serine 110. Cysteine 139 and cysteine 201 are joined by a disulfide. A glycan (N-linked (GlcNAc...) asparagine) is linked at asparagine 140. Position 173 (serine 173) interacts with Mg(2+). Glutamate 234 serves as a coordination point for Ca(2+). N-linked (GlcNAc...) asparagine glycans are attached at residues asparagine 267 and asparagine 277. Residues phenylalanine 287, glutamate 288, and aspartate 303 each coordinate Ca(2+). Position 329 (glutamate 329) interacts with Mg(2+). The Zn(2+) site is built by aspartate 334, histidine 338, aspartate 375, histidine 376, and histidine 450. The cysteines at positions 485 and 492 are disulfide-linked. The GPI-anchor amidated serine moiety is linked to residue serine 502. Residues 503–529 (AVSPGYMSTLLCLLAGKMLMLMAAAEP) constitute a propeptide, removed in mature form.

The protein belongs to the alkaline phosphatase family. Homodimer. Requires Mg(2+) as cofactor. The cofactor is Zn(2+). Ca(2+) serves as cofactor. As to expression, embryo and testis.

The protein resides in the cell membrane. The enzyme catalyses a phosphate monoester + H2O = an alcohol + phosphate. With respect to regulation, inhibited by L-leucine, EDTA and heat. Its function is as follows. Alkaline phosphatase that can hydrolyze various phosphate compounds. This chain is Alkaline phosphatase, germ cell type (Alpg), found in Mus musculus (Mouse).